A 159-amino-acid polypeptide reads, in one-letter code: Cytochrome c-type biogenesis protein CcmE (159 aa).

The Cytoplasmic portion of the chain corresponds to 1-8 (MNLRRKNR). The chain crosses the membrane as a helical; Signal-anchor for type II membrane protein span at residues 9 to 29 (LWVVCAVLAGLALTTALVLYA). At 30-159 (LRANIDLFYT…PQRADKDTSS (130 aa)) the chain is on the periplasmic side. The interval 129 to 159 (KHDENYTPPEVEKAMQENHRRPQRADKDTSS) is disordered. The heme site is built by histidine 130 and tyrosine 134.

It belongs to the CcmE/CycJ family.

It localises to the cell inner membrane. Functionally, heme chaperone required for the biogenesis of c-type cytochromes. Transiently binds heme delivered by CcmC and transfers the heme to apo-cytochromes in a process facilitated by CcmF and CcmH. The protein is Cytochrome c-type biogenesis protein CcmE of Salmonella paratyphi A (strain ATCC 9150 / SARB42).